The sequence spans 39 residues: Natriuretic peptide HsNP-a (39 aa).

Residues 1 to 8 constitute a propeptide that is removed on maturation; it reads SGSKTAKI. Cys-12 and Cys-28 are oxidised to a cystine.

This sequence belongs to the natriuretic peptide family. Expressed by the venom gland.

Its subcellular location is the secreted. Snake venom natriuretic peptide that targets both NPR1 and NPR2. Exhibits hypotensive and vasodepressor activities. The protein is Natriuretic peptide HsNP-a of Hoplocephalus stephensii (Stephens's banded snake).